The chain runs to 223 residues: Thymidine kinase (223 aa).

ATP contacts are provided by residues 19-26 (GPMFAGKT) and 96-99 (DEVQ). Residue Glu97 is the Proton acceptor of the active site. Zn(2+) is bound by residues Cys153, Cys156, Cys191, and His194.

Belongs to the thymidine kinase family. In terms of assembly, homotetramer.

The protein localises to the cytoplasm. It catalyses the reaction thymidine + ATP = dTMP + ADP + H(+). This chain is Thymidine kinase, found in Ureaplasma parvum serovar 3 (strain ATCC 27815 / 27 / NCTC 11736).